A 364-amino-acid polypeptide reads, in one-letter code: Transcription factor SPEECHLESS (364 aa).

The disordered stretch occupies residues 35-109; the sequence is GEISPTAAST…QKMSHVTVER (75 aa). S38 carries the post-translational modification Phosphoserine; by ASK7. At T40 the chain carries Phosphothreonine; by ASK7. A compositionally biased stretch (polar residues) spans 40 to 53; the sequence is TAASTPKDGTTSSK. The residue at position 43 (S43) is a Phosphoserine; by ASK7. Position 44 is a phosphothreonine; by ASK7 (T44). Position 65 is a phosphoserine; by ASK7 (S65). Residues 79–92 are compositionally biased toward acidic residues; sequence EDEEEEDGDGEAEE. Positions 99 to 112 are basic motif; that stretch reads QQKMSHVTVERNRR. A bHLH domain is found at 99-150; that stretch reads QQKMSHVTVERNRRKQMNEHLTVLRSLMPCFYVKRGDQASIIGGVVEYISEL. The helix-loop-helix motif stretch occupies residues 113 to 150; it reads KQMNEHLTVLRSLMPCFYVKRGDQASIIGGVVEYISEL. Phosphoserine; by ASK7 is present on S171. Positions 171–227 are disordered; the sequence is SPRVVPSPRPSPPVLSPRKPPLSPRINHHQIHHHLLLPPISPRTPQPTSPYRAIPPQ. A compositionally biased stretch (pro residues) spans 175–193; it reads VPSPRPSPPVLSPRKPPLS. S177 is subject to Phosphoserine; by ASK7, MPK3 and MPK6. S181 carries the phosphoserine; by ASK7 modification. Residue S186 is modified to Phosphoserine; by CDKA-1, ASK7, MPK3 and MPK6. S193 bears the Phosphoserine; by MPK3 and MPK6 mark. A compositionally biased stretch (basic residues) spans 196–205; that stretch reads INHHQIHHHL. Residues 209-218 show a composition bias toward pro residues; that stretch reads PISPRTPQPT. Residue S211 is modified to Phosphoserine; by MPK3 and MPK6. The residue at position 214 (T214) is a Phosphothreonine; by ASK7, MPK3 and MPK6. S219 carries the post-translational modification Phosphoserine; by ASK7, MPK3 and MPK6.

As to quaternary structure, homodimer. Forms dimers with SCRM and SCRM2. May interact with CDKA-1. Post-translationally, phosphorylated by ASK7/BIN2 and ASK3/SK12; this post-translational modification inhibits activity and limit epidermal cell proliferation. Phosphorylation by MPK3 and MPK6 leads to the inhibition of stomatal fate and to degradation. Stabilized by CDKA-1-mediated phosphorylation at Ser-186 which promotes stomatal development. Expressed in developing leaf epidermis. Reduced accumulation in the stomatal lineage ground cells (SLGCs) where BASL is polarized in the cell cortex. Observed in small cells of non-protruding hypocotyl cell files and of developing cotyledon epidermis. Restricted to meristemoids (stomatal precursor cell) in leaves epidermis, mostly in dividing cells of non-protruding cell files.

It localises to the nucleus. With respect to regulation, negatively regulated through phosphorylation by the MAPK module. Activity is constrained by polarized BASL in stomatal lineage ground cells (SLGCs) undergoing ACD. Functionally, transcription factor acting as an integration node for stomata and brassinosteroid (BR) signaling pathways to control stomatal initiation and development. Activates transcription when in the presence of SCRM/ICE1. Functions as a dimer with SCRM or SCRM2 during stomatal initiation. Required for the initiation, the spacing and the formation of stomata, by promoting the first asymmetric cell divisions. Together with FMA and MUTE, modulates the stomata formation. Involved in the regulation of growth reduction under osmotic stress (e.g. mannitol), associated with a quick decrease of meristemoid mother cells (MMCs) number lower stomatal index and density. This Arabidopsis thaliana (Mouse-ear cress) protein is Transcription factor SPEECHLESS.